The chain runs to 141 residues: Envelope protein A28 homolog (141 aa).

The helical; Signal-anchor for type II membrane protein transmembrane segment at 1-21 (MNPTSIVLIVIATVAVCLIIM) threads the bilayer. Residues 22–141 (QIYYIYENYD…QDCIFLKSVI (120 aa)) are Virion surface-facing.

The protein belongs to the poxviridae A28 protein family. Contains two intramolecular disulfide bonds. They are created by the viral disulfide bond formation pathway, a poxvirus-specific pathway that operates on the cytoplasmic side of the MV membranes.

The protein resides in the virion membrane. In terms of biological role, envelope protein required for virus entry into host cell and for cell-cell fusion (syncytium formation). This is Envelope protein A28 homolog from Erythrocebus patas (Red guenon).